Consider the following 450-residue polypeptide: UDP-N-acetylmuramoylalanine--D-glutamate ligase (450 aa).

Residue 119-125 participates in ATP binding; it reads GSNGKTT.

This sequence belongs to the MurCDEF family.

Its subcellular location is the cytoplasm. The catalysed reaction is UDP-N-acetyl-alpha-D-muramoyl-L-alanine + D-glutamate + ATP = UDP-N-acetyl-alpha-D-muramoyl-L-alanyl-D-glutamate + ADP + phosphate + H(+). It functions in the pathway cell wall biogenesis; peptidoglycan biosynthesis. Its function is as follows. Cell wall formation. Catalyzes the addition of glutamate to the nucleotide precursor UDP-N-acetylmuramoyl-L-alanine (UMA). The chain is UDP-N-acetylmuramoylalanine--D-glutamate ligase from Streptococcus pneumoniae serotype 19F (strain G54).